Reading from the N-terminus, the 352-residue chain is tRNA pseudouridine synthase D (352 aa).

D81 acts as the Nucleophile in catalysis. The TRUD domain maps to 157–303 (GVPNYFGAQR…MDHERRILRL (147 aa)).

It belongs to the pseudouridine synthase TruD family.

It carries out the reaction uridine(13) in tRNA = pseudouridine(13) in tRNA. Responsible for synthesis of pseudouridine from uracil-13 in transfer RNAs. The protein is tRNA pseudouridine synthase D of Pseudomonas entomophila (strain L48).